A 198-amino-acid polypeptide reads, in one-letter code: Probable GTP-binding protein EngB (198 aa).

An EngB-type G domain is found at 22-195 (DLPEIALAGR…WKAIHKFTKT (174 aa)). GTP-binding positions include 30–37 (GRSNVGKS), 57–61 (GKTQT), 75–78 (DVPG), 142–145 (TKAD), and 174–176 (FSS). Mg(2+) is bound by residues S37 and T59.

Belongs to the TRAFAC class TrmE-Era-EngA-EngB-Septin-like GTPase superfamily. EngB GTPase family. Requires Mg(2+) as cofactor.

Functionally, necessary for normal cell division and for the maintenance of normal septation. This is Probable GTP-binding protein EngB from Bacillus anthracis (strain A0248).